We begin with the raw amino-acid sequence, 81 residues long: Photosystem I iron-sulfur center (81 aa).

4Fe-4S ferredoxin-type domains are found at residues 1-31 and 39-68; these read MSHK…MVPW and IASS…IRVY. C11, C14, C17, C21, C48, C51, C54, and C58 together coordinate [4Fe-4S] cluster.

As to quaternary structure, the cyanobacterial PSI reaction center is composed of one copy each of PsaA,B,C,D,E,F,I,J,K,L,M and X, and forms trimeric complexes. It depends on [4Fe-4S] cluster as a cofactor.

It localises to the cellular thylakoid membrane. It carries out the reaction reduced [plastocyanin] + hnu + oxidized [2Fe-2S]-[ferredoxin] = oxidized [plastocyanin] + reduced [2Fe-2S]-[ferredoxin]. Its function is as follows. Apoprotein for the two 4Fe-4S centers FA and FB of photosystem I (PSI); essential for photochemical activity. FB is the terminal electron acceptor of PSI, donating electrons to ferredoxin. The C-terminus interacts with PsaA/B/D and helps assemble the protein into the PSI complex. Required for binding of PsaD and PsaE to PSI. PSI is a plastocyanin/cytochrome c6-ferredoxin oxidoreductase, converting photonic excitation into a charge separation, which transfers an electron from the donor P700 chlorophyll pair to the spectroscopically characterized acceptors A0, A1, FX, FA and FB in turn. The sequence is that of Photosystem I iron-sulfur center from Rippkaea orientalis (strain PCC 8801 / RF-1) (Cyanothece sp. (strain PCC 8801)).